Here is a 217-residue protein sequence, read N- to C-terminus: Cytidylate kinase (217 aa).

9–17 is an ATP binding site; it reads GPSSSGKSS.

Belongs to the cytidylate kinase family. Type 1 subfamily.

The protein localises to the cytoplasm. It carries out the reaction CMP + ATP = CDP + ADP. The catalysed reaction is dCMP + ATP = dCDP + ADP. This chain is Cytidylate kinase, found in Mycoplasma pneumoniae (strain ATCC 29342 / M129 / Subtype 1) (Mycoplasmoides pneumoniae).